A 342-amino-acid chain; its full sequence is MNIGIVNDLPLAVEALRRTIALRPEHRVLWVATDGAQAVDFCVAQPPDLVLMDLVMPRIDGVSATRSIMERSPCAILIVTANVGANASYVYEAMGAGALDAVDTPTLGQGGSADPSQPLLAKIDQIGRLLATRMPAAAPAAAAPAPQGALPPLVAIGASAGGPTALTALLRRLPEDFPAAIVIVQHVDQAFAIGMAQWLDGYSRLPVRIARQGGVPQAGEVLLAATNDHLHLTARGSLAYTRRPEETPYRPSVDVFFHSVVDHWKGEAIGVLLTGMGRDGALGLKAMRTKGHYTIAQDEATSAVYGMPKAAAAIGAASAVLPLERIADQLISLVQRNRQRRR.

One can recognise a Response regulatory domain in the interval 2–119 (NIGIVNDLPL…GGSADPSQPL (118 aa)). Position 53 is a 4-aspartylphosphate (aspartate 53). The region spanning 144–337 (PAPQGALPPL…DQLISLVQRN (194 aa)) is the CheB-type methylesterase domain. Residues serine 159, histidine 186, and aspartate 279 contribute to the active site.

It belongs to the CheB family. Post-translationally, phosphorylated by CheA. Phosphorylation of the N-terminal regulatory domain activates the methylesterase activity.

The protein localises to the cytoplasm. It carries out the reaction [protein]-L-glutamate 5-O-methyl ester + H2O = L-glutamyl-[protein] + methanol + H(+). It catalyses the reaction L-glutaminyl-[protein] + H2O = L-glutamyl-[protein] + NH4(+). In terms of biological role, involved in chemotaxis. Part of a chemotaxis signal transduction system that modulates chemotaxis in response to various stimuli. Catalyzes the demethylation of specific methylglutamate residues introduced into the chemoreceptors (methyl-accepting chemotaxis proteins or MCP) by CheR. Also mediates the irreversible deamidation of specific glutamine residues to glutamic acid. In Burkholderia thailandensis (strain ATCC 700388 / DSM 13276 / CCUG 48851 / CIP 106301 / E264), this protein is Protein-glutamate methylesterase/protein-glutamine glutaminase 4.